We begin with the raw amino-acid sequence, 409 residues long: Thiaminase-1 (409 aa).

Residues 1–29 (MSKVKGFIYKPLMVMLALLLVVVSPAGAG) form the signal peptide. The active-site Nucleophile is Cys-143. Catalysis depends on Glu-271, which acts as the Proton acceptor.

As to quaternary structure, monomer.

The protein resides in the secreted. The catalysed reaction is pyridine + thiamine = heteropyrithiamine + 5-(2-hydroxyethyl)-4-methylthiazole. In terms of biological role, degrades thiamine by replacing its thiazole moiety with a wide range of nucleophiles. The protein is Thiaminase-1 of Paenibacillus thiaminolyticus (Bacillus thiaminolyticus).